Here is a 676-residue protein sequence, read N- to C-terminus: MPVDSTSELLKHYEVYETIGSGGFAKVKLGRHKLTGEKVAIKIMEKKDLGDDLPRVKIEIEAMKNLSHQHVCRLYHVIETTSKIYMVLEYCPGGELFDYIIAKDRLSEEETRVFFRQIISALAYVHSQGYAHRDLKPENLLIDEDHNLKLIDFGLCAKPKGGLGFELLTCCGSPAYAAPELIQGKAYIGSEADVWSMGVLLYALLCGFLPFDDDNCMVLYRKITRGKYSNPHWLSPSSILLLNQMMQVDPKRRLTVKHLLDHPWVMRGYSTPVEWHSKYPLGHIDEDCITEMAVTFKQSKQRTIQLVSEWKYDQITATYLLLLAKKRQGRPVRLRAECPVIDIVCSPLQDMQLKKSLRFTEDDDGVHPVVLGSMVFPPDCYDDENPWTPLTPKNTHTTNTPRMKLYPETTEKWNEMAYSPVIEHSRPCRQKPERRERTKENKENLAVPGTDGDVFALPAPRTPTSSRKVKSNRTVMTTPNHNNNKSSEVNKGAGSATKEGSRRREVEQQQNGQQGELNILAFSPERRSRSLDLAGCQVDSGQKRKGGKVFGSLERGLDKVITMLTPSKKRGPRDGPRKIKAQYNVTLTNQTNADQVLNQILSILPEKNVDFVQKGYTLKCHTQSDFGKVTMQFELEVCLLQKPEVVGIRRQRLKGDAWVYKHLVEDILSSSSQWSA.

In terms of domain architecture, Protein kinase spans 13–265 (YEVYETIGSG…VKHLLDHPWV (253 aa)). ATP is bound by residues 19–27 (IGSGGFAKV) and lysine 42. The Proton acceptor role is filled by aspartate 134. Phosphothreonine; by autocatalysis is present on threonine 169. A Phosphoserine; by autocatalysis modification is found at serine 173. The interval 284–323 (IDEDCITEMAVTFKQSKQRTIQLVSEWKYDQITATYLLLL) is UBA-like. Positions 328–673 (QGRPVRLRAE…VEDILSSSSQ (346 aa)) are autoinhibitory region. Residues 423–443 (EHSRPCRQKPERRERTKENKE) show a composition bias toward basic and acidic residues. The interval 423-518 (EHSRPCRQKP…QQNGQQGELN (96 aa)) is disordered. Positions 462 to 489 (TPTSSRKVKSNRTVMTTPNHNNNKSSEV) are enriched in polar residues. Positions 508–518 (QQQNGQQGELN) are enriched in low complexity. A KA1 domain is found at 624 to 673 (SDFGKVTMQFELEVCLLQKPEVVGIRRQRLKGDAWVYKHLVEDILSSSSQ).

This sequence belongs to the protein kinase superfamily. CAMK Ser/Thr protein kinase family. SNF1 subfamily. Post-translationally, autophosphorylated: autophosphorylation of the T-loop at Thr-169 and Ser-173 is required for activation. Strongly expressed in the eye, gill, kidney, spleen, muscle, ovary and testis and weakly in the heart, liver, and gut. Expressed in the brain and lateral mesoderm at 12 hours post-fertilization (hpf).

Its subcellular location is the cell membrane. The catalysed reaction is L-seryl-[protein] + ATP = O-phospho-L-seryl-[protein] + ADP + H(+). It catalyses the reaction L-threonyl-[protein] + ATP = O-phospho-L-threonyl-[protein] + ADP + H(+). With respect to regulation, activated by autophosphorylation of the T-loop at Thr-169 and Ser-173: in contrast to other members of the SNF1 subfamily, phosphorylation at Thr-169 is not mediated by STK11/LKB1 but via autophosphorylation instead. Functionally, serine/threonine-protein kinase involved in various processes such as cell cycle regulation, self-renewal of stem cells, apoptosis and splicing regulation. Also plays a role in primitive hematopoiesis, possibly by affecting the expression of genes critical for hematopoiesis. The protein is Maternal embryonic leucine zipper kinase (melk) of Danio rerio (Zebrafish).